Reading from the N-terminus, the 311-residue chain is MTKLIFMGTPDFSATVLKGLLESDQYEVLAVVTQPDRAVGRKKEIRITPVKEVALSYGLPIYQPEKLSGSPEMEAIMNLGADGIVTVAFGQFLPSKLLARMNFVVNVHASLLPKHRGGAPIHYALIQGDKETGVTIMETVKEMDAGDMISRRSIPITDEDNVGTLFEKLAIVGRDLLLDTLPAYLSGDIQPEAQDPSQVTFSPNIRPEEERLDWNMTNRQLFNQIRGMNPWPVAHTLWQGERFKIYEAELADGEGQPGEILEIGKRQLLVATGEGALVLKTVQPAGKPKMTISDFLNGAGRNLAVGDKFGN.

110 to 113 is a (6S)-5,6,7,8-tetrahydrofolate binding site; the sequence is SLLP.

This sequence belongs to the Fmt family.

It carries out the reaction L-methionyl-tRNA(fMet) + (6R)-10-formyltetrahydrofolate = N-formyl-L-methionyl-tRNA(fMet) + (6S)-5,6,7,8-tetrahydrofolate + H(+). Functionally, attaches a formyl group to the free amino group of methionyl-tRNA(fMet). The formyl group appears to play a dual role in the initiator identity of N-formylmethionyl-tRNA by promoting its recognition by IF2 and preventing the misappropriation of this tRNA by the elongation apparatus. This Streptococcus gordonii (strain Challis / ATCC 35105 / BCRC 15272 / CH1 / DL1 / V288) protein is Methionyl-tRNA formyltransferase.